We begin with the raw amino-acid sequence, 172 residues long: NAD(P)H-quinone oxidoreductase subunit J (172 aa).

This sequence belongs to the complex I 30 kDa subunit family. As to quaternary structure, NDH-1 can be composed of about 15 different subunits; different subcomplexes with different compositions have been identified which probably have different functions.

The protein resides in the cellular thylakoid membrane. The catalysed reaction is a plastoquinone + NADH + (n+1) H(+)(in) = a plastoquinol + NAD(+) + n H(+)(out). The enzyme catalyses a plastoquinone + NADPH + (n+1) H(+)(in) = a plastoquinol + NADP(+) + n H(+)(out). In terms of biological role, NDH-1 shuttles electrons from an unknown electron donor, via FMN and iron-sulfur (Fe-S) centers, to quinones in the respiratory and/or the photosynthetic chain. The immediate electron acceptor for the enzyme in this species is believed to be plastoquinone. Couples the redox reaction to proton translocation, and thus conserves the redox energy in a proton gradient. Cyanobacterial NDH-1 also plays a role in inorganic carbon-concentration. The chain is NAD(P)H-quinone oxidoreductase subunit J from Synechococcus elongatus (strain ATCC 33912 / PCC 7942 / FACHB-805) (Anacystis nidulans R2).